The sequence spans 405 residues: Replication factor C large subunit (405 aa).

ATP is bound at residue 47-54 (GPPGVGKT).

It belongs to the activator 1 small subunits family. RfcL subfamily. Heteropentamer composed of four small subunits (RfcS) and one large subunit (RfcL). Probably interacts with PCNA subunit PCNA3.

In terms of biological role, part of the RFC clamp loader complex which loads the PCNA sliding clamp onto DNA. The complex possesses DNA-dependent ATPase activity. The chain is Replication factor C large subunit (rfcL) from Saccharolobus solfataricus (strain ATCC 35092 / DSM 1617 / JCM 11322 / P2) (Sulfolobus solfataricus).